A 438-amino-acid polypeptide reads, in one-letter code: Flagellum-specific ATP synthase (438 aa).

Positions 119–139 (GLSPVSTEQSPPNPMKRPPIR) are disordered. Residue 165-172 (AGSGVGKS) participates in ATP binding.

It belongs to the ATPase alpha/beta chains family.

It is found in the cytoplasm. The enzyme catalyses ATP + H2O + 4 H(+)(in) = ADP + phosphate + 5 H(+)(out). Its function is as follows. Probable catalytic subunit of a protein translocase for flagellum-specific export, or a proton translocase involved in local circuits at the flagellum. This Bacillus subtilis (strain 168) protein is Flagellum-specific ATP synthase (fliI).